The chain runs to 85 residues: uncharacterized protein (85 aa).

This sequence belongs to the ycf76 family.

The protein localises to the plastid. It is found in the chloroplast. This is an uncharacterized protein from Oryza sativa subsp. japonica (Rice).